Reading from the N-terminus, the 464-residue chain is JmjC domain-containing protein 1 (464 aa).

Residues 182 to 349 form the JmjC domain; sequence LYAKDMHLFR…QMYTALKEQY (168 aa).

The polypeptide is JmjC domain-containing protein 1 (jmj1) (Schizosaccharomyces pombe (strain 972 / ATCC 24843) (Fission yeast)).